A 702-amino-acid polypeptide reads, in one-letter code: Ribosomal RNA large subunit methyltransferase K/L (702 aa).

Residues 43 to 154 (LIYQSLMWSR…KETASIALDL (112 aa)) form the THUMP domain.

It belongs to the methyltransferase superfamily. RlmKL family.

The protein resides in the cytoplasm. It catalyses the reaction guanosine(2445) in 23S rRNA + S-adenosyl-L-methionine = N(2)-methylguanosine(2445) in 23S rRNA + S-adenosyl-L-homocysteine + H(+). The enzyme catalyses guanosine(2069) in 23S rRNA + S-adenosyl-L-methionine = N(2)-methylguanosine(2069) in 23S rRNA + S-adenosyl-L-homocysteine + H(+). Its function is as follows. Specifically methylates the guanine in position 2445 (m2G2445) and the guanine in position 2069 (m7G2069) of 23S rRNA. The sequence is that of Ribosomal RNA large subunit methyltransferase K/L from Salmonella gallinarum (strain 287/91 / NCTC 13346).